The chain runs to 375 residues: Cyclic AMP receptor 2 (375 aa).

The Extracellular portion of the chain corresponds to 1 to 10 (MTIMSDIIAQ). The chain crosses the membrane as a helical span at residues 11-30 (RTILLIADFSSIIGCSLVLI). Residues 31-44 (GFWRLKLLRNHITK) are Cytoplasmic-facing. Residues 45 to 65 (IISLFCATSLFKDVISTIITL) form a helical membrane-spanning segment. Residues 66–82 (LYKPDQTESGFPCYLHA) are Extracellular-facing. The chain crosses the membrane as a helical span at residues 83-108 (IVITFGSLACWLWTLMLSFSIYNLIV). Residues 109–119 (RREPEPERFEK) lie on the Cytoplasmic side of the membrane. The helical transmembrane segment at 120 to 138 (FYFCLCYGLPLISTIVMLS) threads the bilayer. Over 139–161 (THIIQPVGGWCWIGDNYDGYRFG) the chain is Extracellular. A helical membrane pass occupies residues 162-180 (LFYGPFFFIWGTSAILVGL). The Cytoplasmic segment spans residues 181 to 204 (TSKYTYSVIRSSVSDNKDKHMTYQ). S192 is modified (phosphoserine). A helical membrane pass occupies residues 205-223 (FKLINYIVVFLVCWVFAIV). The Extracellular segment spans residues 224 to 234 (NRILNGLNQFP). Residues 235 to 259 (TVPNVLHTYFSVSHGFYASITFIYN) traverse the membrane as a helical segment. The Cytoplasmic portion of the chain corresponds to 260-375 (NPLMWRYFGA…NNINNKNDMI (116 aa)). A phosphoserine mark is found at S298 and S303. The disordered stretch occupies residues 338–375 (PKENENQNHHHHHHHHHHHNHYNNNNNNNNINNKNDMI). The span at 346-358 (HHHHHHHHHHHNH) shows a compositional bias: basic residues. The segment covering 359–375 (YNNNNNNNNINNKNDMI) has biased composition (low complexity).

The protein belongs to the G-protein coupled receptor 5 family. Post-translationally, C-terminal Ser or Thr residues may be phosphorylated.

The protein resides in the membrane. Its function is as follows. Receptor for cAMP. Coordinates the aggregation of individual cells into a multicellular organism and regulates the expression of a large number of developmentally regulated genes. The activity of this receptor is mediated by G proteins. Plays a key role during tip formation and late development; involved in cAMP-directed patterning of pre stalk cells as they sort before and during tip formation. This Dictyostelium discoideum (Social amoeba) protein is Cyclic AMP receptor 2 (carB).